Reading from the N-terminus, the 54-residue chain is UPF0391 membrane protein Rfer_1875 (54 aa).

A run of 2 helical transmembrane segments spans residues 5 to 25 (AVVFFVIALIAALFGFGGIAA) and 30 to 50 (IGKILFIVFAILAVASFLFGL).

It belongs to the UPF0391 family.

The protein localises to the cell membrane. The sequence is that of UPF0391 membrane protein Rfer_1875 from Albidiferax ferrireducens (strain ATCC BAA-621 / DSM 15236 / T118) (Rhodoferax ferrireducens).